A 424-amino-acid chain; its full sequence is GTPase Obg (424 aa).

The Obg domain maps to 1 to 158 (MFIDTAKIFV…RWIKLELKLL (158 aa)). The OBG-type G domain maps to 159–331 (ADVGLIGFPN…LMKEAARLLS (173 aa)). Residues 165-172 (GFPNVGKS), 190-194 (FTTLK), 212-215 (DIPG), 282-285 (NKSD), and 312-314 (SAA) contribute to the GTP site. Mg(2+)-binding residues include Ser172 and Thr192. Positions 345 to 424 (RFIEEEKRFT…LNDFEFDFLL (80 aa)) constitute an OCT domain.

The protein belongs to the TRAFAC class OBG-HflX-like GTPase superfamily. OBG GTPase family. Monomer. Mg(2+) serves as cofactor.

The protein localises to the cytoplasm. Its function is as follows. An essential GTPase which binds GTP, GDP and possibly (p)ppGpp with moderate affinity, with high nucleotide exchange rates and a fairly low GTP hydrolysis rate. Plays a role in control of the cell cycle, stress response, ribosome biogenesis and in those bacteria that undergo differentiation, in morphogenesis control. This chain is GTPase Obg, found in Clostridium botulinum (strain Langeland / NCTC 10281 / Type F).